Consider the following 50-residue polypeptide: Large ribosomal subunit protein bL32c (50 aa).

The protein belongs to the bacterial ribosomal protein bL32 family.

It is found in the plastid. The sequence is that of Large ribosomal subunit protein bL32c (rpl32) from Euglena longa (Euglenophycean alga).